A 168-amino-acid chain; its full sequence is Sperm acrosome-associated protein 9 (168 aa).

As to quaternary structure, microtubule inner protein component of sperm flagellar doublet microtubules. Interacts with CABP1 and CALR. Interacts with INCA1. Interacts with microtubules. In terms of tissue distribution, expressed in sperm (at protein level). Expressed from almost all the cell types of testis, with abundant expression in round and elongated spermatids (at protein level). Predominantly expressed in tissues containing motile cilia.

It is found in the cytoplasm. Its subcellular location is the cytoplasmic vesicle. It localises to the secretory vesicle. The protein resides in the acrosome. The protein localises to the cytoskeleton. It is found in the cilium basal body. Its subcellular location is the flagellum axoneme. It localises to the cilium axoneme. The protein resides in the nucleus. Microtubule inner protein (MIP) part of the dynein-decorated doublet microtubules (DMTs) of multiciliated respiratory cells and the distal singlet microtubules of monoflagellated spermatozoa. Forms an extensive interaction network cross-linking the lumen of axonemal doublet microtubules. In Mus musculus (Mouse), this protein is Sperm acrosome-associated protein 9.